The primary structure comprises 363 residues: GDSL esterase/lipase At3g14220 (363 aa).

Positions 1 to 28 (MAKNRNLVFFLGVLASFTLSSFPVTVSG) are cleaved as a signal peptide. The Nucleophile role is filled by serine 39. Active-site residues include aspartate 318 and histidine 321.

Belongs to the 'GDSL' lipolytic enzyme family.

Its subcellular location is the secreted. In Arabidopsis thaliana (Mouse-ear cress), this protein is GDSL esterase/lipase At3g14220.